We begin with the raw amino-acid sequence, 186 residues long: Peptidyl-tRNA hydrolase (186 aa).

Tyrosine 14 serves as a coordination point for tRNA. Histidine 19 acts as the Proton acceptor in catalysis. The tRNA site is built by phenylalanine 64, asparagine 66, and asparagine 112.

This sequence belongs to the PTH family. In terms of assembly, monomer.

The protein localises to the cytoplasm. It catalyses the reaction an N-acyl-L-alpha-aminoacyl-tRNA + H2O = an N-acyl-L-amino acid + a tRNA + H(+). In terms of biological role, hydrolyzes ribosome-free peptidyl-tRNAs (with 1 or more amino acids incorporated), which drop off the ribosome during protein synthesis, or as a result of ribosome stalling. Its function is as follows. Catalyzes the release of premature peptidyl moieties from peptidyl-tRNA molecules trapped in stalled 50S ribosomal subunits, and thus maintains levels of free tRNAs and 50S ribosomes. In Listeria monocytogenes serotype 4b (strain CLIP80459), this protein is Peptidyl-tRNA hydrolase.